Here is a 304-residue protein sequence, read N- to C-terminus: uncharacterized protein (304 aa).

NAD(+) contacts are provided by residues 136–137 (GI), 215–217 (VGR), and Asp-241. Residue Arg-217 is part of the active site. Residue Glu-246 is part of the active site. His-265 functions as the Proton donor in the catalytic mechanism. Position 265–268 (265–268 (HTAN)) interacts with NAD(+).

Belongs to the D-isomer specific 2-hydroxyacid dehydrogenase family.

This is an uncharacterized protein from Corynebacterium melassecola.